A 139-amino-acid chain; its full sequence is Nucleoside diphosphate kinase (139 aa).

The ATP site is built by lysine 10, phenylalanine 58, arginine 86, threonine 92, arginine 103, and asparagine 113. Histidine 116 acts as the Pros-phosphohistidine intermediate in catalysis.

The protein belongs to the NDK family. As to quaternary structure, homotetramer. Mg(2+) serves as cofactor.

Its subcellular location is the cytoplasm. The enzyme catalyses a 2'-deoxyribonucleoside 5'-diphosphate + ATP = a 2'-deoxyribonucleoside 5'-triphosphate + ADP. It carries out the reaction a ribonucleoside 5'-diphosphate + ATP = a ribonucleoside 5'-triphosphate + ADP. Functionally, major role in the synthesis of nucleoside triphosphates other than ATP. The ATP gamma phosphate is transferred to the NDP beta phosphate via a ping-pong mechanism, using a phosphorylated active-site intermediate. This chain is Nucleoside diphosphate kinase, found in Nitratidesulfovibrio vulgaris (strain DSM 19637 / Miyazaki F) (Desulfovibrio vulgaris).